The following is a 313-amino-acid chain: Formimidoylglutamase (313 aa).

Residues H130, D155, H157, D159, D241, and D243 each coordinate Mn(2+).

It belongs to the arginase family. Mn(2+) is required as a cofactor.

The enzyme catalyses N-formimidoyl-L-glutamate + H2O = formamide + L-glutamate. It participates in amino-acid degradation; L-histidine degradation into L-glutamate; L-glutamate from N-formimidoyl-L-glutamate (hydrolase route): step 1/1. Catalyzes the conversion of N-formimidoyl-L-glutamate to L-glutamate and formamide. The chain is Formimidoylglutamase from Salmonella typhi.